The sequence spans 431 residues: Protein EARLY STARVATION 1, chloroplastic (431 aa).

A chloroplast-targeting transit peptide spans 1–19 (MAACSRGLVARPFDLTARG). Disordered stretches follow at residues 65-126 (GNKP…DTGI) and 403-431 (GVYP…SPLE). Residues 415 to 431 (PAPPSDDPPGMPPSPLE) show a composition bias toward pro residues.

This sequence belongs to the ESV1 family.

Its subcellular location is the plastid. It localises to the chloroplast stroma. Functionally, binds preferentially to highly ordered alpha-glucans, such as starch and crystalline maltodextrins. Involved in the organization of the starch granule matrix, thus influencing starch turnover by modulating the accessibility of starch polymers to modifying and degrading enzymes. Required for the control of starch degradation in leaves and starch distribution in nonphotosynthetic parts. Promotes gravitropic responses, negative in shoots but positive in roots, by facilitating starch granules (statoliths) formation in hypocotyls and roots columella. Facilitates tight packing of starch granules in grains. The sequence is that of Protein EARLY STARVATION 1, chloroplastic from Oryza sativa subsp. japonica (Rice).